We begin with the raw amino-acid sequence, 308 residues long: Maspardin (308 aa).

An AB hydrolase-1 domain is found at 87–159; it reads FCDGFRKLLD…NSFWLMPAFM (73 aa). A Phosphoserine modification is found at S304.

Belongs to the AB hydrolase superfamily. In terms of assembly, interacts with CD4. Interacts with ALDH16A1. Expressed in cell lines FT.1 and in a L cell fibroblast derivative (at protein level).

It is found in the cytoplasm. Its function is as follows. May play a role as a negative regulatory factor in CD4-dependent T-cell activation. This chain is Maspardin (Spg21), found in Mus musculus (Mouse).